The following is a 912-amino-acid chain: Translation initiation factor IF-2 (912 aa).

A disordered region spans residues 185 to 204; it reads NATRPKRKTKEEKQKEREER. The segment covering 193-204 has biased composition (basic and acidic residues); that stretch reads TKEEKQKEREER. The region spanning 411-581 is the tr-type G domain; that stretch reads LRPPIVTIMG…LLEAELLDLK (171 aa). The tract at residues 420–427 is G1; that stretch reads GHVDHGKT. 420-427 lines the GTP pocket; sequence GHVDHGKT. The tract at residues 445–449 is G2; sequence GITQH. Positions 467–470 are G3; sequence DTPG. Residues 467 to 471 and 521 to 524 contribute to the GTP site; these read DTPGH and NKID. The tract at residues 521–524 is G4; that stretch reads NKID. The G5 stretch occupies residues 557 to 559; that stretch reads SAK.

It belongs to the TRAFAC class translation factor GTPase superfamily. Classic translation factor GTPase family. IF-2 subfamily.

It is found in the cytoplasm. Functionally, one of the essential components for the initiation of protein synthesis. Protects formylmethionyl-tRNA from spontaneous hydrolysis and promotes its binding to the 30S ribosomal subunits. Also involved in the hydrolysis of GTP during the formation of the 70S ribosomal complex. This Azobacteroides pseudotrichonymphae genomovar. CFP2 protein is Translation initiation factor IF-2.